The sequence spans 135 residues: MEADRGRNNKVRCAVVDTNVLMYVYLNKADVVGQLREFGFSRFLITASVKRELEKLEMSLRGKEKVAARFALKLLEHFEVVETESEGDPSLIEAAEKYGCILITNDKELKRKAKQRGIPVGYLKEDKRVFVELLD.

The 104-residue stretch at 15-118 (VVDTNVLMYV…LKRKAKQRGI (104 aa)) folds into the PINc domain. Mg(2+) contacts are provided by Asp17 and Asp88.

It belongs to the PINc/VapC protein family. In terms of assembly, dimer. Requires Mg(2+) as cofactor.

In terms of biological role, toxic component of a type II toxin-antitoxin (TA) system. An RNase. The polypeptide is Ribonuclease VapC9 (Archaeoglobus fulgidus (strain ATCC 49558 / DSM 4304 / JCM 9628 / NBRC 100126 / VC-16)).